The following is a 260-amino-acid chain: Putative cysteine-rich repeat secretory protein 23 (260 aa).

Positions 1-31 (MSSSFVYKSLFLVPILAVVAMQLSFVQSVLS) are cleaved as a signal peptide. 2 Gnk2-homologous domains span residues 38–136 (YLHH…NISY) and 142–254 (LPEQ…LYLF).

It belongs to the cysteine-rich repeat secretory protein family.

The protein resides in the secreted. This Arabidopsis thaliana (Mouse-ear cress) protein is Putative cysteine-rich repeat secretory protein 23 (CRRSP23).